Consider the following 1404-residue polypeptide: DNA-directed RNA polymerase subunit beta' (1404 aa).

Residues cysteine 70, cysteine 72, cysteine 85, and cysteine 88 each contribute to the Zn(2+) site. Positions 460, 462, and 464 each coordinate Mg(2+). Residues cysteine 814, cysteine 888, cysteine 895, and cysteine 898 each coordinate Zn(2+).

Belongs to the RNA polymerase beta' chain family. The RNAP catalytic core consists of 2 alpha, 1 beta, 1 beta' and 1 omega subunit. When a sigma factor is associated with the core the holoenzyme is formed, which can initiate transcription. Requires Mg(2+) as cofactor. It depends on Zn(2+) as a cofactor.

The catalysed reaction is RNA(n) + a ribonucleoside 5'-triphosphate = RNA(n+1) + diphosphate. In terms of biological role, DNA-dependent RNA polymerase catalyzes the transcription of DNA into RNA using the four ribonucleoside triphosphates as substrates. The protein is DNA-directed RNA polymerase subunit beta' of Shewanella amazonensis (strain ATCC BAA-1098 / SB2B).